The following is a 113-amino-acid chain: Dynein light chain Tctex-type 1 (113 aa).

N-acetylmethionine is present on M1. An interaction with GNB1 region spans residues 41 to 113 (QWTTNVVEQT…CIVSAFGLSI (73 aa)).

This sequence belongs to the dynein light chain Tctex-type family. As to quaternary structure, homodimer. The cytoplasmic dynein 1 complex consists of two catalytic heavy chains (HCs) and a number of non-catalytic subunits presented by intermediate chains (ICs), light intermediate chains (LICs) and light chains (LCs); the composition seems to vary in respect to the IC, LIC and LC composition. The heavy chain homodimer serves as a scaffold for the probable homodimeric assembly of the respective non-catalytic subunits. The ICs and LICs bind directly to the HC dimer and dynein LCs assemble on the IC dimer. DYNLT1 and DYNLT3 compete for association with dynein IC (DYNC1I1 or DYNC1I2). Self-associates. Interacts with RHO. Interacts with DYNC1I1 and DYNC1I2. Interacts with DOC2A, DOC2B and SCN10A. Interacts with PVR. Interacts with SVIL isoform 2. Interacts with GNB1; the interaction occurs in presence of guanine nucleotide-binding protein G(T) subunit gamma; the interaction diminishes the association of DYNLT1 with dynein IC (DYNC1I1 or DYNC1I2). Interacts with GNB2, GNB3 and GNB5; the interactions occur in presence of guanine nucleotide-binding protein G(T) subunit gamma. Interacts with ACVR2B and ARHGEF2. Interacts with DNAI4. Interacts with CFAP61. Post-translationally, phosphorylated by BMPR2. The phosphorylation status is proposed to regulate the association with the cytoplasmic dynein complex and may have role in cytoplasmic dynein cargo release.

It localises to the golgi apparatus. The protein localises to the cytoplasm. The protein resides in the cytoskeleton. Its subcellular location is the spindle. Functionally, acts as one of several non-catalytic accessory components of the cytoplasmic dynein 1 complex that are thought to be involved in linking dynein to cargos and to adapter proteins that regulate dynein function. Cytoplasmic dynein 1 acts as a motor for the intracellular retrograde motility of vesicles and organelles along microtubules. Binds to transport cargos and is involved in apical cargo transport such as rhodopsin-bearing vesicles in polarized epithelia. Is involved in intracellular targeting of D-type retrovirus gag polyproteins to the cytoplasmic assembly site. May also be a accessory component of axonemal dynein. In terms of biological role, plays a role in neuronal morphogenesis; the function is independent of cytoplasmic dynein and seems to be coupled to regulation of the actin cytoskeleton by enhancing Rac1 activity. Required for neurite outgrowth. The function in neurogenesis may be regulated by association with a G-protein beta-gamma dimer. May function as a receptor-independent activator of heterotrimeric G-protein signaling; the activation appears to be independent of a nucleotide exchange. Plays a role in regulating neurogenesis; inhibits the genesis of neurons from precursor cells during cortical development presumably by antagonizing ARHGEF2. Unrelated to the role in retrograde microtubule-associated movement may play a role in the dimerization of cytoplasmic proteins/domains such as for ACVR2B. Binds to the cytoplasmic domain of ACVR2B and, in vitro, inhibits ACVR2B signaling. Involved in the regulation of mitotic spindle orientation. This Rattus norvegicus (Rat) protein is Dynein light chain Tctex-type 1 (Dynlt1).